The primary structure comprises 1135 residues: DNA-directed RNA polymerase subunit beta' (1135 aa).

Positions 60, 62, 75, and 78 each coordinate Zn(2+). Residues Asp450, Asp452, and Asp454 each coordinate Mg(2+). Residues Cys795, Cys869, Cys876, and Cys879 each coordinate Zn(2+).

Belongs to the RNA polymerase beta' chain family. The RNAP catalytic core consists of 2 alpha, 1 beta, 1 beta' and 1 omega subunit. When a sigma factor is associated with the core the holoenzyme is formed, which can initiate transcription. It depends on Mg(2+) as a cofactor. Zn(2+) is required as a cofactor.

It carries out the reaction RNA(n) + a ribonucleoside 5'-triphosphate = RNA(n+1) + diphosphate. Its function is as follows. DNA-dependent RNA polymerase catalyzes the transcription of DNA into RNA using the four ribonucleoside triphosphates as substrates. This Clostridium tetani (strain Massachusetts / E88) protein is DNA-directed RNA polymerase subunit beta'.